The chain runs to 167 residues: Troponin C-akin-1 protein (167 aa).

Y17–L20 contacts substrate. E92 acts as the Proton acceptor in catalysis.

It belongs to the gamma-glutamylcyclotransferase family. In terms of tissue distribution, in embryos, expression is seen in heart cells of the dorsal vessel and hindgut visceral mesoderm.

In terms of biological role, putative gamma-glutamylcyclotransferase. The sequence is that of Troponin C-akin-1 protein (Tina-1) from Drosophila melanogaster (Fruit fly).